Here is a 97-residue protein sequence, read N- to C-terminus: Apolipoprotein C-II (97 aa).

An N-terminal signal peptide occupies residues 1-22 (MGSRFFLALFLVLLVLGNEVQG). The segment at 63-71 (SVDEKLRDM) is lipid binding. Positions 75-97 (SSAAMSTYAGIFTDQLLTLLKGE) are lipoprotein lipase cofactor.

The protein belongs to the apolipoprotein C2 family. Proapolipoprotein C-II is synthesized as a sialic acid containing glycoprotein which is subsequently desialylated prior to its proteolytic processing. Post-translationally, proapolipoprotein C-II, the major form found in plasma undergoes proteolytic cleavage of its N-terminal hexapeptide to generate the mature form apolipoprotein C-II, which occurs as the minor form in plasma.

Its subcellular location is the secreted. Component of chylomicrons, very low-density lipoproteins (VLDL), low-density lipoproteins (LDL), and high-density lipoproteins (HDL) in plasma. Plays an important role in lipoprotein metabolism as an activator of lipoprotein lipase. The chain is Apolipoprotein C-II (Apoc2) from Grammomys surdaster (African woodland thicket rat).